The chain runs to 895 residues: Protein translocase subunit SecA (895 aa).

ATP contacts are provided by residues Gln-90, 108–112 (GEGKS), and Asp-498.

This sequence belongs to the SecA family.

It localises to the plastid. Its subcellular location is the chloroplast stroma. The protein localises to the chloroplast thylakoid membrane. It carries out the reaction ATP + H2O + cellular proteinSide 1 = ADP + phosphate + cellular proteinSide 2.. Its function is as follows. Has a central role in coupling the hydrolysis of ATP to the transfer of proteins across the thylakoid membrane. This Cyanidium caldarium (Red alga) protein is Protein translocase subunit SecA.